A 117-amino-acid chain; its full sequence is Appetite-regulating hormone (117 aa).

A signal peptide spans 1–23 (MVSSATICSLLLLSMLWMDMAMA). Residue S26 is the site of O-decanoyl serine; alternate attachment. S26 is lipidated: O-hexanoyl serine; alternate. S26 carries the O-octanoyl serine; alternate lipid modification. Residues 28–68 (LSPEHQKAQQRKESKKPPAKLQPRALEGWLHPEDRGQAEEA) are disordered. A compositionally biased stretch (basic and acidic residues) spans 31–43 (EHQKAQQRKESKK). Positions 52–75 (ALEGWLHPEDRGQAEEAEEELEIR) are cleaved as a propeptide — removed in mature form. L98 bears the Leucine amide mark. Residues 99–117 (GKFLQDILWEEVKEAPANK) constitute a propeptide, removed in mature form.

Belongs to the motilin family. Post-translationally, O-octanoylated by GOAT/MBOAT4. O-octanoylation is essential for ghrelin activity. The replacement of Ser-26 by aromatic tryptophan preserves ghrelin activity. In terms of processing, amidation of Leu-98 is essential for obestatin activity. As to expression, ghrelin is broadly expressed with higher expression in the stomach. Very low levels are detected in the hypothalamus, heart, lung, pancreas, intestine and adipose tissue. Obestatin is most highly expressed in jejunum, and also found in duodenum, stomach, pituitary, ileum, liver, hypothalamus and heart. Expressed in low levels in pancreas, cerebellum, cerebrum, kidney, testis, ovary colon and lung.

The protein localises to the secreted. In terms of biological role, ghrelin is the ligand for growth hormone secretagogue receptor type 1 (GHSR). Induces the release of growth hormone from the pituitary. Has an appetite-stimulating effect, induces adiposity and stimulates gastric acid secretion. Involved in growth regulation. Obestatin may be the ligand for GPR39. May have an appetite-reducing effect resulting in decreased food intake. May reduce gastric emptying activity and jejunal motility. The sequence is that of Appetite-regulating hormone (Ghrl) from Rattus norvegicus (Rat).